The sequence spans 156 residues: Small ribosomal subunit protein uS7 (156 aa).

This sequence belongs to the universal ribosomal protein uS7 family. In terms of assembly, part of the 30S ribosomal subunit. Contacts proteins S9 and S11.

In terms of biological role, one of the primary rRNA binding proteins, it binds directly to 16S rRNA where it nucleates assembly of the head domain of the 30S subunit. Is located at the subunit interface close to the decoding center, probably blocks exit of the E-site tRNA. The polypeptide is Small ribosomal subunit protein uS7 (Clostridium beijerinckii (strain ATCC 51743 / NCIMB 8052) (Clostridium acetobutylicum)).